Reading from the N-terminus, the 82-residue chain is Putative membrane protein insertion efficiency factor (82 aa).

It belongs to the UPF0161 family.

The protein localises to the cell membrane. Its function is as follows. Could be involved in insertion of integral membrane proteins into the membrane. The chain is Putative membrane protein insertion efficiency factor from Streptococcus thermophilus (strain ATCC BAA-491 / LMD-9).